The following is a 151-amino-acid chain: 4-hydroxybenzoyl-CoA thioesterase (151 aa).

Residue glutamate 73 is part of the active site. Residue 100-102 (FFR) participates in substrate binding.

The protein belongs to the thioesterase PaaI family. In terms of assembly, homotetramer.

It catalyses the reaction 4-hydroxybenzoyl-CoA + H2O = 4-hydroxybenzoate + CoA + H(+). It functions in the pathway xenobiotic degradation; 4-chlorobenzoate degradation; 4-hydroxybenzoate from 4-chlorobenzoate: step 3/3. The chain is 4-hydroxybenzoyl-CoA thioesterase from Arthrobacter globiformis.